We begin with the raw amino-acid sequence, 173 residues long: Rubredoxin-2 (173 aa).

Rubredoxin-like domains are found at residues 2–53 (ASYK…FMLI) and 119–170 (YLKW…YVLY). Residues Cys-6, Cys-9, Cys-39, Cys-42, Cys-124, Cys-127, Cys-157, and Cys-160 each coordinate Fe cation.

Belongs to the rubredoxin family. Fe(3+) serves as cofactor.

It is found in the cytoplasm. Its pathway is hydrocarbon metabolism; alkane degradation. Involved in the hydrocarbon hydroxylating system, which transfers electrons from NADH to rubredoxin reductase and then through rubredoxin to alkane 1 monooxygenase. This chain is Rubredoxin-2 (alkG), found in Ectopseudomonas oleovorans (Pseudomonas oleovorans).